We begin with the raw amino-acid sequence, 254 residues long: Probable triosephosphate isomerase 2 (254 aa).

9-11 (NMK) is a binding site for substrate. Histidine 96 functions as the Electrophile in the catalytic mechanism. The active-site Proton acceptor is the glutamate 168. Substrate is bound by residues glycine 174 and serine 212.

Belongs to the triosephosphate isomerase family. As to quaternary structure, homodimer.

It is found in the cytoplasm. The catalysed reaction is D-glyceraldehyde 3-phosphate = dihydroxyacetone phosphate. It participates in carbohydrate biosynthesis; gluconeogenesis. Its pathway is carbohydrate degradation; glycolysis; D-glyceraldehyde 3-phosphate from glycerone phosphate: step 1/1. Functionally, involved in the gluconeogenesis. Catalyzes stereospecifically the conversion of dihydroxyacetone phosphate (DHAP) to D-glyceraldehyde-3-phosphate (G3P). The sequence is that of Probable triosephosphate isomerase 2 from Listeria monocytogenes serotype 4b (strain F2365).